We begin with the raw amino-acid sequence, 185 residues long: Protein GrpE (185 aa).

Residues 1 to 20 (MSQEKKEELQSEAQVTKEET) show a composition bias toward basic and acidic residues. The interval 1–28 (MSQEKKEELQSEAQVTKEETPQANEAAA) is disordered.

The protein belongs to the GrpE family. As to quaternary structure, homodimer.

It localises to the cytoplasm. Functionally, participates actively in the response to hyperosmotic and heat shock by preventing the aggregation of stress-denatured proteins, in association with DnaK and GrpE. It is the nucleotide exchange factor for DnaK and may function as a thermosensor. Unfolded proteins bind initially to DnaJ; upon interaction with the DnaJ-bound protein, DnaK hydrolyzes its bound ATP, resulting in the formation of a stable complex. GrpE releases ADP from DnaK; ATP binding to DnaK triggers the release of the substrate protein, thus completing the reaction cycle. Several rounds of ATP-dependent interactions between DnaJ, DnaK and GrpE are required for fully efficient folding. The protein is Protein GrpE of Sulfurimonas denitrificans (strain ATCC 33889 / DSM 1251) (Thiomicrospira denitrificans (strain ATCC 33889 / DSM 1251)).